The primary structure comprises 779 residues: Probable ATP-dependent RNA helicase DHX40 (779 aa).

A disordered region spans residues 1-53 (MSRFPAVAGRAPRRQEEGERSRDLQEERPSAVCIADREEKGCTSQEGGTTPTF). Residues 13-41 (RRQEEGERSRDLQEERPSAVCIADREEKG) are compositionally biased toward basic and acidic residues. Residues 42 to 53 (CTSQEGGTTPTF) are compositionally biased toward polar residues. In terms of domain architecture, Helicase ATP-binding spans 63 to 231 (IQAVRDNSFL…FGNCPIFDIP (169 aa)). Residue 76–83 (GNTGSGKT) participates in ATP binding. The DEAH box signature appears at 173-176 (DEAH). Residues 263-442 (TMDIHLNEMA…SVVLTLKCLA (180 aa)) form the Helicase C-terminal domain. The tract at residues 737–779 (SKDVLKKMQRRNDDKSISDARARFLERKQQRTQDHSDTRKETG) is disordered.

The protein belongs to the DEAD box helicase family. DEAH subfamily.

It carries out the reaction ATP + H2O = ADP + phosphate + H(+). Probable ATP-dependent RNA helicase. The chain is Probable ATP-dependent RNA helicase DHX40 (DHX40) from Pongo abelii (Sumatran orangutan).